A 386-amino-acid chain; its full sequence is ADP,ATP carrier protein 1, mitochondrial (386 aa).

The transit peptide at 1 to 76 (MDQVQHPSVM…PSTASAICVQ (76 aa)) directs the protein to the mitochondrion. Solcar repeat units follow at residues 84-177 (SSFA…FKRL), 189-281 (KWFA…LKPV), and 289-375 (DSFF…LQLI). A run of 5 helical transmembrane segments spans residues 86–113 (FAID…VKLL), 154–178 (TANV…KRLF), 187–207 (YWKW…SSLL), 257–278 (FNIS…YDSL), and 292–312 (FASF…SYPI). Positions 159 and 171 each coordinate ADP. R316 lines the ADP pocket. Residues 316-321 (RRRMMM) are important for transport activity. The Nucleotide carrier signature motif signature appears at 316-321 (RRRMMM). The helical transmembrane segment at 352–372 (AGSNILRAIAGAGVLAGYDKL) threads the bilayer.

The protein belongs to the mitochondrial carrier (TC 2.A.29) family. As to quaternary structure, monomer.

It is found in the mitochondrion inner membrane. It carries out the reaction ADP(in) + ATP(out) = ADP(out) + ATP(in). Its activity is regulated as follows. The matrix-open state (m-state) is inhibited by the membrane-permeable bongkrekic acid (BKA). The cytoplasmic-open state (c-state) is inhibited by the membrane-impermeable toxic inhibitor carboxyatractyloside (CATR). Functionally, ADP:ATP antiporter that mediates import of ADP into the mitochondrial matrix for ATP synthesis, and export of ATP out to fuel the cell. Cycles between the cytoplasmic-open state (c-state) and the matrix-open state (m-state): operates by the alternating access mechanism with a single substrate-binding site intermittently exposed to either the cytosolic (c-state) or matrix (m-state) side of the inner mitochondrial membrane. In Gossypium hirsutum (Upland cotton), this protein is ADP,ATP carrier protein 1, mitochondrial (ANT1).